The primary structure comprises 197 residues: MLDVILVIIGYLIGSISSAIVVCRAMNLGDPRQGGSGNPGATNVLRLAGKVPAGITLLGDWLKGTLPVLLAWLATEDPVVASAAGLAAFFGHLFPVYFRFQGGKGVATGLGVILAWSPLALLATVVTWLAVAGAFRYSSLAAVVAFAMAPIYMLWLSASPVLTAATAILTAAIVWRHRENIVRLAAGEESRIGSSGS.

A run of 5 helical transmembrane segments spans residues Leu-2–Val-22, Ala-53–Leu-73, Pro-78–Phe-98, Val-112–Ala-132, and Tyr-152–Val-174.

It belongs to the PlsY family. As to quaternary structure, probably interacts with PlsX.

The protein resides in the cell inner membrane. It catalyses the reaction an acyl phosphate + sn-glycerol 3-phosphate = a 1-acyl-sn-glycero-3-phosphate + phosphate. Its pathway is lipid metabolism; phospholipid metabolism. Catalyzes the transfer of an acyl group from acyl-phosphate (acyl-PO(4)) to glycerol-3-phosphate (G3P) to form lysophosphatidic acid (LPA). This enzyme utilizes acyl-phosphate as fatty acyl donor, but not acyl-CoA or acyl-ACP. In Halorhodospira halophila (strain DSM 244 / SL1) (Ectothiorhodospira halophila (strain DSM 244 / SL1)), this protein is Glycerol-3-phosphate acyltransferase.